A 508-amino-acid polypeptide reads, in one-letter code: Bifunctional purine biosynthesis protein PurH (508 aa).

The MGS-like domain occupies 1-145 (MAKKALISVS…KNYKYVTILV (145 aa)).

It belongs to the PurH family.

The catalysed reaction is (6R)-10-formyltetrahydrofolate + 5-amino-1-(5-phospho-beta-D-ribosyl)imidazole-4-carboxamide = 5-formamido-1-(5-phospho-D-ribosyl)imidazole-4-carboxamide + (6S)-5,6,7,8-tetrahydrofolate. It catalyses the reaction IMP + H2O = 5-formamido-1-(5-phospho-D-ribosyl)imidazole-4-carboxamide. It functions in the pathway purine metabolism; IMP biosynthesis via de novo pathway; 5-formamido-1-(5-phospho-D-ribosyl)imidazole-4-carboxamide from 5-amino-1-(5-phospho-D-ribosyl)imidazole-4-carboxamide (10-formyl THF route): step 1/1. Its pathway is purine metabolism; IMP biosynthesis via de novo pathway; IMP from 5-formamido-1-(5-phospho-D-ribosyl)imidazole-4-carboxamide: step 1/1. The protein is Bifunctional purine biosynthesis protein PurH of Thermoanaerobacter sp. (strain X514).